The chain runs to 494 residues: UPF0371 protein Sez_1293 (494 aa).

The protein belongs to the UPF0371 family.

This chain is UPF0371 protein Sez_1293, found in Streptococcus equi subsp. zooepidemicus (strain MGCS10565).